A 505-amino-acid polypeptide reads, in one-letter code: Outer capsid protein VP5 (505 aa).

The segment at 1–42 (MGKFTSFLKRAGSATKKALTSDAAKRMYKMAGKTLQKVVESE) is involved in membrane permeabilization.

This sequence belongs to the orbivirus VP5 family.

Its subcellular location is the virion. In terms of biological role, VP5 protein is one of the two proteins (with VP2) which constitute the virus particle outer capsid. Acts as a membrane permeabilization protein that mediates release of viral particles from endosomal compartments into the cytoplasm. Permeabilization activity is probably negatively regulated by VP2 and is triggered by endosomal degradation of VP2 and exposure to low pH. This African horse sickness virus 9 (AHSV-9) protein is Outer capsid protein VP5 (Segment-6).